The following is a 959-amino-acid chain: ATP-dependent 6-phosphofructokinase subunit beta (959 aa).

An N-terminal catalytic PFK domain 1 region spans residues Thr2–Ser573. The disordered stretch occupies residues Lys144–Ser167. Residue Thr152 is modified to Phosphothreonine. Positions Glu158 to Ser167 are enriched in low complexity. Residues Ser163 and Ser171 each carry the phosphoserine modification. Residues Gly206, Arg270–Cys271, and Gly300–Ser303 contribute to the ATP site. Asp301 serves as a coordination point for Mg(2+). Beta-D-fructose 6-phosphate-binding positions include Ser346–Asp348, Arg383, Met390–Arg392, Glu447, Arg475, and His481–Arg484. Residue Asp348 is the Proton acceptor of the active site. The interval Ala574–Leu587 is interdomain linker. The interval Lys588–Asp959 is C-terminal regulatory PFK domain 2. Residues Arg658, Thr716–Asn720, Arg754, and Gln761–Gly763 each bind beta-D-fructose 2,6-bisphosphate. Ser803 is modified (phosphoserine). Beta-D-fructose 2,6-bisphosphate contacts are provided by residues Lys847, His853–Gln856, and Arg935.

The protein belongs to the phosphofructokinase type A (PFKA) family. ATP-dependent PFK group I subfamily. Eukaryotic two domain clade 'E' sub-subfamily. In terms of assembly, heterooctamer of 4 alpha and 4 beta chains. Requires Mg(2+) as cofactor.

It is found in the cytoplasm. Its subcellular location is the mitochondrion outer membrane. It catalyses the reaction beta-D-fructose 6-phosphate + ATP = beta-D-fructose 1,6-bisphosphate + ADP + H(+). It participates in carbohydrate degradation; glycolysis; D-glyceraldehyde 3-phosphate and glycerone phosphate from D-glucose: step 3/4. Its activity is regulated as follows. Allosterically activated by ADP, AMP, or fructose 2,6-bisphosphate, and allosterically inhibited by ATP or citrate. In terms of biological role, catalyzes the phosphorylation of D-fructose 6-phosphate to fructose 1,6-bisphosphate by ATP, the first committing step of glycolysis. This chain is ATP-dependent 6-phosphofructokinase subunit beta (PFK2), found in Saccharomyces cerevisiae (strain ATCC 204508 / S288c) (Baker's yeast).